A 185-amino-acid polypeptide reads, in one-letter code: UPF0669 protein C6orf120 homolog (185 aa).

A signal peptide spans 1–23 (MATPWRCALLMILASQVVILVKC). Residue Asn47 is glycosylated (N-linked (GlcNAc...) asparagine).

Belongs to the UPF0669 family.

It is found in the secreted. May be involved in induction of apoptosis in CD4(+) T-cells, but not CD8(+) T-cells or hepatocytes. The polypeptide is UPF0669 protein C6orf120 homolog (Rattus norvegicus (Rat)).